We begin with the raw amino-acid sequence, 199 residues long: NADH-quinone oxidoreductase subunit C (199 aa).

Belongs to the complex I 30 kDa subunit family. As to quaternary structure, NDH-1 is composed of 14 different subunits. Subunits NuoB, C, D, E, F, and G constitute the peripheral sector of the complex.

It is found in the cell inner membrane. It catalyses the reaction a quinone + NADH + 5 H(+)(in) = a quinol + NAD(+) + 4 H(+)(out). Functionally, NDH-1 shuttles electrons from NADH, via FMN and iron-sulfur (Fe-S) centers, to quinones in the respiratory chain. The immediate electron acceptor for the enzyme in this species is believed to be ubiquinone. Couples the redox reaction to proton translocation (for every two electrons transferred, four hydrogen ions are translocated across the cytoplasmic membrane), and thus conserves the redox energy in a proton gradient. The polypeptide is NADH-quinone oxidoreductase subunit C (Roseobacter denitrificans (strain ATCC 33942 / OCh 114) (Erythrobacter sp. (strain OCh 114))).